The sequence spans 698 residues: SPX domain-containing membrane protein OsI_21475 (698 aa).

Residues 2–145 (VNFGKKLMAD…GYRFTDYYVT (144 aa)) form the SPX domain. Transmembrane regions (helical) follow at residues 248-268 (FMSL…TYII), 279-299 (LGAA…AQIF), 316-336 (LIFS…AYDM), 339-357 (LTVL…ARAV), 376-396 (AGFV…AGLL), and 412-432 (LPGW…WISF). A disordered region spans residues 467-495 (LLRDSSKKDEDDDEEVDDSEEGTHDSRKP). A compositionally biased stretch (acidic residues) spans 476 to 486 (EDDDEEVDDSE). 5 helical membrane-spanning segments follow: residues 514-534 (LLIY…SSVI), 545-565 (AVAI…AVVG), 577-597 (LLMV…KITS), 605-625 (VVSA…NLSL), and 671-691 (LLNV…ASTF).

Belongs to the major facilitator superfamily.

It is found in the membrane. In Oryza sativa subsp. indica (Rice), this protein is SPX domain-containing membrane protein OsI_21475.